The following is a 441-amino-acid chain: Ribosomal protein uS12 methylthiotransferase RimO (441 aa).

Residues 8 to 118 (PKIGFVSLGC…VLQHVHHYVP (111 aa)) form the MTTase N-terminal domain. C17, C53, C82, C150, C154, and C157 together coordinate [4Fe-4S] cluster. The Radical SAM core domain maps to 136–373 (LTPRHYAYLK…MQLQQQISAE (238 aa)). Residues 376–441 (QEKVGREILV…DEYDLWGSRV (66 aa)) enclose the TRAM domain.

The protein belongs to the methylthiotransferase family. RimO subfamily. [4Fe-4S] cluster is required as a cofactor.

Its subcellular location is the cytoplasm. The catalysed reaction is L-aspartate(89)-[ribosomal protein uS12]-hydrogen + (sulfur carrier)-SH + AH2 + 2 S-adenosyl-L-methionine = 3-methylsulfanyl-L-aspartate(89)-[ribosomal protein uS12]-hydrogen + (sulfur carrier)-H + 5'-deoxyadenosine + L-methionine + A + S-adenosyl-L-homocysteine + 2 H(+). In terms of biological role, catalyzes the methylthiolation of an aspartic acid residue of ribosomal protein uS12. This chain is Ribosomal protein uS12 methylthiotransferase RimO, found in Salmonella heidelberg (strain SL476).